The sequence spans 580 residues: Cyclin-K (580 aa).

The tract at residues 262–580 is disordered; it reads KQQMPHHTPH…GGLGRAAWMR (319 aa). Composition is skewed to low complexity over residues 263 to 277 and 285 to 321; these read QQMPHHTPHQLQQPP and VPQVQQSQPSQSSEPSQPQQKDPQQPAQQQQPAQQPK. Phosphoserine is present on residues S324, S328, S329, and S340. Residues 377–386 are compositionally biased toward low complexity; that stretch reads PLAAALGEAE. Positions 400 to 426 are enriched in pro residues; the sequence is QIPPPAHPAPVHQPPPLPHRPPPPPPS. Low complexity predominate over residues 427 to 444; sequence SYMTGMSTTSSYMSGEGY. The segment covering 477 to 568 has biased composition (pro residues); sequence VYPPNPPPPP…PPPIPPPGMP (92 aa).

Belongs to the cyclin family. Cyclin C subfamily. As to quaternary structure, regulatory subunit of cyclin-dependent kinases. Identified in a complex with a kinase and the RNA polymerase II holoenzyme. Interacts with POLR2A. Interacts with CDK12 and CDK13. Interacts with CDK9 according to PubMed:10574912; does not interact with CDK9 according to PubMed:22012619. (Microbial infection) Interacts with human herpes virus 1 (HHV-1) transcriptional regulator ICP22. In terms of tissue distribution, widely expressed. Highest levels in testis.

The protein resides in the nucleus. Regulatory subunit of cyclin-dependent kinases that mediates activation of target kinases. Plays a role in transcriptional regulation via its role in regulating the phosphorylation of the C-terminal domain (CTD) of the large subunit of RNA polymerase II (POLR2A). The protein is Cyclin-K (CCNK) of Homo sapiens (Human).